Reading from the N-terminus, the 36-residue chain is Allergen Act d 3 (36 aa).

In terms of processing, N-glycosylated.

The protein is Allergen Act d 3 of Actinidia deliciosa (Kiwi).